Reading from the N-terminus, the 217-residue chain is Membrane-associated progesterone receptor component 2 (217 aa).

S15 is a glycosylation site (O-linked (Xyl...) (chondroitin sulfate) serine). The helical transmembrane segment at 40 to 62 threads the bilayer; the sequence is ALLATGGEMLLNVALVALVLLGA. S84, S98, and S202 each carry phosphoserine. The Cytochrome b5 heme-binding domain maps to 96 to 195; sequence DFSLEQLRQY…EKYDYVGRLL (100 aa). The interval 196–217 is disordered; sequence KPGEEPSEYTDEEDTKDHSKQD. A compositionally biased stretch (acidic residues) spans 200 to 209; it reads EPSEYTDEED. Position 204 is a phosphotyrosine (Y204). Phosphothreonine is present on T205.

The protein belongs to the cytochrome b5 family. MAPR subfamily. In terms of assembly, interacts with PGRMC1. Interacts with AAAS. In terms of tissue distribution, expressed in brown adipose tissue, white adipose tissue, liver, heart, skeletal muscle, brain and adrenal gland.

The protein localises to the membrane. Its subcellular location is the nucleus envelope. It is found in the endoplasmic reticulum. It localises to the secreted. Required for the maintenance of uterine histoarchitecture and normal female reproductive lifespan. May serve as a universal non-classical progesterone receptor in the uterus. Intracellular heme chaperone required for delivery of labile, or signaling heme, to the nucleus. Plays a role in adipocyte function and systemic glucose homeostasis. In brown fat, which has a high demand for heme, delivery of labile heme in the nucleus regulates the activity of heme-responsive transcriptional repressors such as NR1D1 and BACH1. The polypeptide is Membrane-associated progesterone receptor component 2 (Mus musculus (Mouse)).